The sequence spans 484 residues: Cobyric acid synthase (484 aa).

Positions 251–438 (ALKVAVPVLS…LHGLFGSDPY (188 aa)) constitute a GATase cobBQ-type domain. Cys333 (nucleophile) is an active-site residue. The active site involves His430.

Belongs to the CobB/CobQ family. CobQ subfamily.

The protein operates within cofactor biosynthesis; adenosylcobalamin biosynthesis. Catalyzes amidations at positions B, D, E, and G on adenosylcobyrinic A,C-diamide. NH(2) groups are provided by glutamine, and one molecule of ATP is hydrogenolyzed for each amidation. The chain is Cobyric acid synthase from Sinorhizobium medicae (strain WSM419) (Ensifer medicae).